The primary structure comprises 311 residues: Delta-1-pyrroline-5-carboxylate reductase kk1I (311 aa).

An N-terminal signal peptide occupies residues Met1–Gly31. Asn59 is a glycosylation site (N-linked (GlcNAc...) asparagine).

Belongs to the pyrroline-5-carboxylate reductase family.

It participates in secondary metabolite biosynthesis. In terms of biological role, delta-1-pyrroline-5-carboxylate reductase; part of the gene cluster that mediates the biosynthesis of KK-1, a novel cyclic depsipeptide with 10 residues which is a promising active compound with high activity against many plant pathogens, especially Botrytis cinerea. Within the pathway, kk1I catalyzes the synthesis of the L-pipecolic acid residue of KK-1 from delta-1-pyrroline-5-carboxylate (P5C), a metabolic intermediate of lysine. The nonribosomal peptide synthetase (NRPS) kk1B catalyzes the elongation and cyclization of the decapeptide chain composed of 1 D-lactic acid residue (D-Lac), 1 pipecolic acid residue (Pip), 1 aspartic acid residue (Asp), 1 isoleucine residue (Ile), 1 glycine residue (Gly), 1 tyrosine residue (Tyr) and 4 valine residues (Val). The Asp, Ile and 3 Val residues are N-methylated by the 5 methyltransferase domains from the NRPS (found in modules 3, 5, 6, 7 and 9), whereas the Tyr residue is O-methylated by the cluster encoded O-methyltransferase kk1A. The thioesterase kk1J is likely to be involved in the corrective mechanism of peptide chain synthesis. The D-lactate dehydrogenase kk1H is involved in the synthesis of D-lactic acid from pyruvic acid, which is recognized by the A domain of the first kk1B module. The pyrroline-5-carboxylate reductase kk1I is involved in the synthesis of the L-pipecolic acid residue of KK-1 from delta-1-pyrroline-5-carboxylate (P5C), a metabolic intermediate of lysine. It still is unclear how kk1C and kk1D are involved in the production of KK-1. In Curvularia clavata, this protein is Delta-1-pyrroline-5-carboxylate reductase kk1I.